Consider the following 354-residue polypeptide: Transcription factor BHLH3 (354 aa).

The disordered stretch occupies residues 124-143; sequence VAEEETSGDKALLHGGGGSS. Residues 178-191 form a basic motif region; that stretch reads GTPSKNLMAERRRR. A bHLH domain is found at 178–227; it reads GTPSKNLMAERRRRKRLNDRLSMLRSIVPKISKMDRTSILGDTIDYVKEL. The helix-loop-helix motif stretch occupies residues 192–227; the sequence is KRLNDRLSMLRSIVPKISKMDRTSILGDTIDYVKEL.

Belongs to the bHLH protein family. In terms of assembly, interacts with LAX1. In terms of processing, phosphorylated by MAPK3 and MAPK6.

The protein resides in the nucleus. The protein localises to the cytoplasm. In terms of biological role, transcription factor involved in defense responses that functions downstream of RAC1 and upstream of PAL1 and WRKY19 genes. The polypeptide is Transcription factor BHLH3 (Oryza sativa subsp. japonica (Rice)).